Reading from the N-terminus, the 446-residue chain is Glutamyl-tRNA reductase (446 aa).

Substrate is bound by residues 49 to 52, S109, 114 to 116, and Q120; these read TCNR and ETQ. C50 (nucleophile) is an active-site residue. NADP(+) is bound at residue 189-194; it reads GAGEMA.

Belongs to the glutamyl-tRNA reductase family. Homodimer.

It carries out the reaction (S)-4-amino-5-oxopentanoate + tRNA(Glu) + NADP(+) = L-glutamyl-tRNA(Glu) + NADPH + H(+). The protein operates within porphyrin-containing compound metabolism; protoporphyrin-IX biosynthesis; 5-aminolevulinate from L-glutamyl-tRNA(Glu): step 1/2. In terms of biological role, catalyzes the NADPH-dependent reduction of glutamyl-tRNA(Glu) to glutamate 1-semialdehyde (GSA). This is Glutamyl-tRNA reductase from Macrococcus caseolyticus (strain JCSC5402) (Macrococcoides caseolyticum).